The chain runs to 60 residues: Homeobox protein engrailed-like A (60 aa).

Positions 1-41 form a DNA-binding region, homeobox; sequence ADQLARLRAEFQANRYLTEERRQNLARELSLNEAQIKIWFQ.

The protein belongs to the engrailed homeobox family.

Its subcellular location is the nucleus. This is Homeobox protein engrailed-like A from Myxine glutinosa (Atlantic hagfish).